Reading from the N-terminus, the 122-residue chain is Large ribosomal subunit protein uL14 (122 aa).

Belongs to the universal ribosomal protein uL14 family. Part of the 50S ribosomal subunit. Forms a cluster with proteins L3 and L19. In the 70S ribosome, L14 and L19 interact and together make contacts with the 16S rRNA in bridges B5 and B8.

Functionally, binds to 23S rRNA. Forms part of two intersubunit bridges in the 70S ribosome. In Nostoc punctiforme (strain ATCC 29133 / PCC 73102), this protein is Large ribosomal subunit protein uL14.